Here is a 470-residue protein sequence, read N- to C-terminus: Pyruvate kinase I (470 aa).

R32 lines the substrate pocket. K(+) is bound by residues N34, S36, D66, and T67. An ATP-binding site is contributed by N34 to H37. R73 contacts ATP. K76 bears the N6-acetyllysine mark. K156 serves as a coordination point for ATP. Residue E222 participates in Mg(2+) binding. Substrate is bound by residues G245, D246, and T278. D246 serves as a coordination point for Mg(2+). N6-acetyllysine is present on K319.

The protein belongs to the pyruvate kinase family. In terms of assembly, homotetramer. Mg(2+) serves as cofactor. The cofactor is K(+).

The enzyme catalyses pyruvate + ATP = phosphoenolpyruvate + ADP + H(+). The protein operates within carbohydrate degradation; glycolysis; pyruvate from D-glyceraldehyde 3-phosphate: step 5/5. The protein is Pyruvate kinase I (pykF) of Escherichia coli O157:H7.